A 173-amino-acid polypeptide reads, in one-letter code: Probable chemoreceptor glutamine deamidase CheD (173 aa).

This sequence belongs to the CheD family.

It carries out the reaction L-glutaminyl-[protein] + H2O = L-glutamyl-[protein] + NH4(+). Probably deamidates glutamine residues to glutamate on methyl-accepting chemotaxis receptors (MCPs), playing an important role in chemotaxis. The polypeptide is Probable chemoreceptor glutamine deamidase CheD (Haloarcula marismortui (strain ATCC 43049 / DSM 3752 / JCM 8966 / VKM B-1809) (Halobacterium marismortui)).